The following is a 380-amino-acid chain: Cytochrome b (380 aa).

Transmembrane regions (helical) follow at residues 34–54 (FGSL…LLAA), 78–99 (WLIR…YLHI), 114–134 (WNTG…GYVL), and 179–199 (FFAL…IHLA). His-84 and His-98 together coordinate heme b. 2 residues coordinate heme b: His-183 and His-197. His-202 is a binding site for a ubiquinone. The next 4 membrane-spanning stretches (helical) occupy residues 227-247 (LKDI…ALFS), 289-309 (LGGV…PLLH), 321-341 (LSQL…WIGS), and 348-368 (FIII…ILFP).

The protein belongs to the cytochrome b family. The cytochrome bc1 complex contains 11 subunits: 3 respiratory subunits (MT-CYB, CYC1 and UQCRFS1), 2 core proteins (UQCRC1 and UQCRC2) and 6 low-molecular weight proteins (UQCRH/QCR6, UQCRB/QCR7, UQCRQ/QCR8, UQCR10/QCR9, UQCR11/QCR10 and a cleavage product of UQCRFS1). This cytochrome bc1 complex then forms a dimer. It depends on heme b as a cofactor.

The protein localises to the mitochondrion inner membrane. In terms of biological role, component of the ubiquinol-cytochrome c reductase complex (complex III or cytochrome b-c1 complex) that is part of the mitochondrial respiratory chain. The b-c1 complex mediates electron transfer from ubiquinol to cytochrome c. Contributes to the generation of a proton gradient across the mitochondrial membrane that is then used for ATP synthesis. This chain is Cytochrome b (MT-CYB), found in Cyrtonyx montezumae (Montezuma quail).